The chain runs to 284 residues: Bifunctional protein FolD (284 aa).

NADP(+) is bound by residues 165–167 (GAS), Ile190, and Ile231.

The protein belongs to the tetrahydrofolate dehydrogenase/cyclohydrolase family. Homodimer.

The catalysed reaction is (6R)-5,10-methylene-5,6,7,8-tetrahydrofolate + NADP(+) = (6R)-5,10-methenyltetrahydrofolate + NADPH. It catalyses the reaction (6R)-5,10-methenyltetrahydrofolate + H2O = (6R)-10-formyltetrahydrofolate + H(+). The protein operates within one-carbon metabolism; tetrahydrofolate interconversion. In terms of biological role, catalyzes the oxidation of 5,10-methylenetetrahydrofolate to 5,10-methenyltetrahydrofolate and then the hydrolysis of 5,10-methenyltetrahydrofolate to 10-formyltetrahydrofolate. The protein is Bifunctional protein FolD of Alkaliphilus metalliredigens (strain QYMF).